A 339-amino-acid chain; its full sequence is Heat-inducible transcription repressor HrcA (339 aa).

It belongs to the HrcA family.

In terms of biological role, negative regulator of class I heat shock genes (grpE-dnaK-dnaJ and groELS operons). Prevents heat-shock induction of these operons. This is Heat-inducible transcription repressor HrcA from Parafrankia sp. (strain EAN1pec).